The primary structure comprises 450 residues: Probable glycosidase CRR1 (450 aa).

The first 17 residues, 1 to 17 (MSKRIIQLILLSAFARA), serve as a signal peptide directing secretion. A GH16 domain is found at 67–347 (SPESCVPVPA…WENAPDIKAH (281 aa)). Glu225 functions as the Nucleophile in the catalytic mechanism. Residue Glu229 is the Proton donor of the active site. A disordered region spans residues 428-450 (AQRQQHHRRSLPHVEAPPITNTM).

This sequence belongs to the glycosyl hydrolase 16 family. CRR1 subfamily.

It is found in the spore wall. Functionally, spore specific glycosidase involved in spore wall assembly during sporulation. May be involved in copper import. The chain is Probable glycosidase CRR1 (CRR1) from Eremothecium gossypii (strain ATCC 10895 / CBS 109.51 / FGSC 9923 / NRRL Y-1056) (Yeast).